The following is a 124-amino-acid chain: Small ribosomal subunit protein uS12 (124 aa).

Position 89 is a 3-methylthioaspartic acid (Asp-89).

The protein belongs to the universal ribosomal protein uS12 family. Part of the 30S ribosomal subunit. Contacts proteins S8 and S17. May interact with IF1 in the 30S initiation complex.

Functionally, with S4 and S5 plays an important role in translational accuracy. Interacts with and stabilizes bases of the 16S rRNA that are involved in tRNA selection in the A site and with the mRNA backbone. Located at the interface of the 30S and 50S subunits, it traverses the body of the 30S subunit contacting proteins on the other side and probably holding the rRNA structure together. The combined cluster of proteins S8, S12 and S17 appears to hold together the shoulder and platform of the 30S subunit. The sequence is that of Small ribosomal subunit protein uS12 from Mannheimia succiniciproducens (strain KCTC 0769BP / MBEL55E).